We begin with the raw amino-acid sequence, 158 residues long: Osmosensory protein A (158 aa).

At T2 the chain carries Phosphothreonine; by PknD. The region spanning 28–139 (AQIRAYLHHL…RSVHKALHDL (112 aa)) is the STAS domain.

This sequence belongs to the anti-sigma-factor antagonist family. In terms of assembly, interacts with Rv2638. Phosphorylation abolishes binding to Rv2638. Phosphorylated on Thr-2 by the serine/threonine-protein kinase PknD. Also phosphorylated to a lesser extent by PknB and PknE. Dephosphorylated by PstP.

Regulated by PknD under osmotic stress. Its function is as follows. Part of a signaling pathway that enables adaptation to osmotic stress through cell wall remodeling and virulence factor production. Unphosphorylated OprA forms a complex with the anti-anti-sigma-factor paralog Rv2638 that dissociates on OprA phosphorylation by PknD. Phosphorylation of OprA may stimulate the release of SigF from an inhibitory complex and enable the transcription of osmotically regulated genes, such as oprA and the ESX-1-associated virulence factor espA. The polypeptide is Osmosensory protein A (Mycobacterium tuberculosis (strain ATCC 25618 / H37Rv)).